Consider the following 749-residue polypeptide: Small G protein signaling modulator 3 (749 aa).

Positions 114-305 (GIPHGMRPQL…RIWDLFFYEG (192 aa)) constitute a Rab-GAP TBC domain. S406 is modified (phosphoserine). Residues 415-439 (EDDLEALKAKNIKQTELVADLREAI) adopt a coiled-coil conformation. Positions 480–539 (SHRRRAKALLDFERHDDDELGFRKNDIITIVSQKDEHCWVGELNGLRGWFPAKFVEVLDE) constitute an SH3 domain. The RUN domain maps to 555-718 (GVTDLVRGTL…FAFSLSQDWE (164 aa)).

This sequence belongs to the small G protein signaling modulator family. As to quaternary structure, interacts with GJA1. Interaction with GJA1 induces its degradation. Interacts via its RUN domain with the C-terminal region of NF2. Interacts with RAB3A, RAB4A, RAB5A, RAB8A, RAB11A, RAP1A, RAP1B, RAP2A, RAP2B and PDCD6IP. No interaction with RAB27A. As to expression, widely expressed.

Its subcellular location is the cytoplasm. Functionally, may play a cooperative role in NF2-mediated growth suppression of cells. The protein is Small G protein signaling modulator 3 of Homo sapiens (Human).